We begin with the raw amino-acid sequence, 1055 residues long: Leukotoxin (1055 aa).

A coiled-coil region spans residues 11–49 (QQAAQFANSVADRAKENIDAAKEQLQKALDKLGKTGKKL). 2 cholesterol recognition/amino acid consensus (CRAC) region regions span residues 334 to 340 (LEEYSKR) and 502 to 506 (VDYLK). Hemolysin-type calcium-binding repeat units follow at residues 721 to 738 (IGST…NDVF), 739 to 756 (HGHD…DDRL), 757 to 774 (YGDN…NDKL), 775 to 792 (YGGA…NNYL), 793 to 810 (DGGE…SDIL), 811 to 828 (RGGS…DDLL), and 829 to 846 (DGGE…NDIY). Residues 795–815 (GEGDDHLEGGNGSDILRGGSG) form a disordered region. The segment at 990-1009 (KGKSSSLMSSSRSSSMLTQK) is disordered. The span at 993 to 1006 (SSSLMSSSRSSSML) shows a compositional bias: low complexity.

The protein belongs to the RTX prokaryotic toxin (TC 1.C.11) family. As to quaternary structure, interacts specifically with the superoxide dismutase [Cu-Zn]. This interaction may protect LtxA from reactive oxygen species and reactive nitrogen species produced by host inflammatory cells during disease. Interacts with the human leukocyte adhesion glycoprotein LFA-1 (ITGAL-ITGB2). Acylated at Lys-562 and Lys-687 by LtxC. This modification is required for full activity. Isolated methyl esters contain palmitoyl and palmitolyl fatty acyl groups with smaller quantities of myristic and stearic fatty acids.

It localises to the cell outer membrane. The protein resides in the secreted. In terms of biological role, virulence factor that plays an important role in immune evasion. Lyses human lymphocytes and monocytes. Binds to the LFA-1 integrin on the surface of the host cell and to cholesterol-containing membranes, which probably results in large LtxA-LFA-1 clusters in lipid rafts. Also shows beta-hemolytic activity on certain types of growth media. In Aggregatibacter actinomycetemcomitans (Actinobacillus actinomycetemcomitans), this protein is Leukotoxin.